Reading from the N-terminus, the 127-residue chain is UPF0325 protein VS_2356 (127 aa).

It belongs to the UPF0325 family.

The polypeptide is UPF0325 protein VS_2356 (Vibrio atlanticus (strain LGP32) (Vibrio splendidus (strain Mel32))).